A 479-amino-acid chain; its full sequence is Poly(A) polymerase catalytic subunit (479 aa).

Catalysis depends on residues D202 and D204. Ca(2+)-binding residues include D202, D204, and D253.

The protein belongs to the poxviridae poly(A) polymerase catalytic subunit family. In terms of assembly, heterodimer of a large (catalytic) subunit and a small (regulatory) subunit.

The enzyme catalyses RNA(n) + ATP = RNA(n)-3'-adenine ribonucleotide + diphosphate. Polymerase that creates the 3'-poly(A) tail of mRNA's. This is Poly(A) polymerase catalytic subunit (OPG063) from Homo sapiens (Human).